The chain runs to 172 residues: Shikimate kinase (172 aa).

14–19 is an ATP binding site; that stretch reads GAGKST. Ser18 is a Mg(2+) binding site. Substrate-binding residues include Asp36, Arg60, and Gly82. Arg120 is an ATP binding site. Substrate is bound at residue Arg140.

The protein belongs to the shikimate kinase family. Monomer. It depends on Mg(2+) as a cofactor.

It is found in the cytoplasm. The catalysed reaction is shikimate + ATP = 3-phosphoshikimate + ADP + H(+). Its pathway is metabolic intermediate biosynthesis; chorismate biosynthesis; chorismate from D-erythrose 4-phosphate and phosphoenolpyruvate: step 5/7. Catalyzes the specific phosphorylation of the 3-hydroxyl group of shikimic acid using ATP as a cosubstrate. This Tolumonas auensis (strain DSM 9187 / NBRC 110442 / TA 4) protein is Shikimate kinase.